Here is a 495-residue protein sequence, read N- to C-terminus: Ribosome biogenesis protein YTM1 (495 aa).

The ubiquitin-like (UBL) domain stretch occupies residues 15–97; it reads VKVIFTTTEP…ETTLTLQYVR (83 aa). 7 WD repeats span residues 129–168, 175–213, 223–262, 264–295, 296–337, 386–426, and 458–495; these read WSSA…IATS, GHTA…HFTG, GHTG…APEP, ASLL…LWSI, HTAP…STLT, GHAN…PATK, and GDGC…TEQK.

This sequence belongs to the WD repeat WDR12/YTM1 family. Component of the NOP7 complex, composed of ERB1, NOP7 and YTM1. The complex is held together by ERB1, which interacts with NOP7 via its N-terminal domain and with YTM1 via a high-affinity interaction between the seven-bladed beta-propeller domains of the 2 proteins. The NOP7 complex associates with the 66S pre-ribosome. Interacts (via UBL domain) with MDN1 (via VWFA/MIDAS domain).

It localises to the nucleus. The protein resides in the nucleolus. Its subcellular location is the nucleoplasm. In terms of biological role, component of the NOP7 complex, which is required for maturation of the 25S and 5.8S ribosomal RNAs and formation of the 60S ribosome. The protein is Ribosome biogenesis protein YTM1 of Chaetomium thermophilum (strain DSM 1495 / CBS 144.50 / IMI 039719) (Thermochaetoides thermophila).